A 127-amino-acid chain; its full sequence is Small ribosomal subunit protein eS6 (127 aa).

Belongs to the eukaryotic ribosomal protein eS6 family.

The protein is Small ribosomal subunit protein eS6 of Picrophilus torridus (strain ATCC 700027 / DSM 9790 / JCM 10055 / NBRC 100828 / KAW 2/3).